We begin with the raw amino-acid sequence, 519 residues long: Xylose import ATP-binding protein XylG (519 aa).

2 ABC transporter domains span residues 6–245 (LTMR…VGRE) and 262–507 (LDVR…LKPA). 38 to 45 (GENGAGKS) serves as a coordination point for ATP.

Belongs to the ABC transporter superfamily. Xylose importer (TC 3.A.1.2.4) family. The complex is composed of two ATP-binding proteins (XylG), two transmembrane proteins (XylH) and a solute-binding protein (XylF).

The protein localises to the cell inner membrane. The enzyme catalyses D-xylose(out) + ATP + H2O = D-xylose(in) + ADP + phosphate + H(+). Its function is as follows. Part of the ABC transporter complex XylFGH involved in xylose import. Responsible for energy coupling to the transport system. The polypeptide is Xylose import ATP-binding protein XylG (Burkholderia cenocepacia (strain HI2424)).